Reading from the N-terminus, the 804-residue chain is G-type lectin S-receptor-like serine/threonine-protein kinase At1g61490 (804 aa).

The signal sequence occupies residues Met1–Ala24. In terms of domain architecture, Bulb-type lectin spans Gly25 to Phe144. Residues Gly25 to Lys425 are Extracellular-facing. Asn53, Asn94, Asn117, Asn134, Asn236, and Asn267 each carry an N-linked (GlcNAc...) asparagine glycan. Residues Pro278–Glu314 enclose the EGF-like domain. Intrachain disulfides connect Cys282-Cys294 and Cys288-Cys302. Residues Asn320, Asn336, and Asn375 are each glycosylated (N-linked (GlcNAc...) asparagine). Positions Cys333–His415 constitute a PAN domain. 2 disulfide bridges follow: Cys368–Cys389 and Cys372–Cys378. A helical membrane pass occupies residues Ile426–Gly446. The Cytoplasmic portion of the chain corresponds to Phe447–Arg804. Residues Phe490–Phe775 form the Protein kinase domain. Residues Leu496–Val504 and Lys518 each bind ATP. Ser524 and Ser539 each carry phosphoserine. The interval Arg579 to Ile596 is caM-binding. The active-site Proton acceptor is Asp615. Ser619 and Ser632 each carry phosphoserine. Thr649 is modified (phosphothreonine). Residue Ser692 is modified to Phosphoserine.

The protein belongs to the protein kinase superfamily. Ser/Thr protein kinase family.

It is found in the cell membrane. The enzyme catalyses L-seryl-[protein] + ATP = O-phospho-L-seryl-[protein] + ADP + H(+). It carries out the reaction L-threonyl-[protein] + ATP = O-phospho-L-threonyl-[protein] + ADP + H(+). This is G-type lectin S-receptor-like serine/threonine-protein kinase At1g61490 from Arabidopsis thaliana (Mouse-ear cress).